We begin with the raw amino-acid sequence, 276 residues long: Bifunctional protein FolD 1 (276 aa).

NADP(+) is bound by residues 161 to 163 (GRG), S186, and T227.

The protein belongs to the tetrahydrofolate dehydrogenase/cyclohydrolase family. As to quaternary structure, homodimer.

It catalyses the reaction (6R)-5,10-methylene-5,6,7,8-tetrahydrofolate + NADP(+) = (6R)-5,10-methenyltetrahydrofolate + NADPH. It carries out the reaction (6R)-5,10-methenyltetrahydrofolate + H2O = (6R)-10-formyltetrahydrofolate + H(+). The protein operates within one-carbon metabolism; tetrahydrofolate interconversion. Functionally, catalyzes the oxidation of 5,10-methylenetetrahydrofolate to 5,10-methenyltetrahydrofolate and then the hydrolysis of 5,10-methenyltetrahydrofolate to 10-formyltetrahydrofolate. This chain is Bifunctional protein FolD 1, found in Frankia casuarinae (strain DSM 45818 / CECT 9043 / HFP020203 / CcI3).